We begin with the raw amino-acid sequence, 297 residues long: uncharacterized protein (297 aa).

3 disordered regions span residues 19 to 133, 147 to 214, and 226 to 277; these read NEVD…EEKE, AEDD…VGIA, and EKTS…SKEA. A compositionally biased stretch (basic and acidic residues) spans 41–52; the sequence is EEPKNEKEKHDD. The segment covering 77 to 87 has biased composition (acidic residues); sequence PAEDDEEDEEF. The span at 88–101 shows a compositional bias: polar residues; that stretch reads PSQSYGPSIPSNFR. Composition is skewed to basic and acidic residues over residues 147–161 and 236–268; these read AEDD…REEW and IHQK…EVRG.

This is an uncharacterized protein from Caenorhabditis elegans.